Reading from the N-terminus, the 590-residue chain is TPR repeat-containing protein PA4667 (590 aa).

TPR repeat units follow at residues 235–268 (VAPLLLRSRLLQSMKRSDEALPLLKAGIKEHPDD), 269–302 (KRVRLAYARLLVEQNRLDDAKAEFAGLVQQFPDD), 370–403 (LPAQLRQTDVLLKAGRVDEAAQRLDKARSEQPDY), 405–438 (IQLYLIEAEALSNNDQQEKAWQAIQEGLKQYPED), and 508–541 (PAILDSMGWINYRQGKLADAERYLRQALQRYPDH).

The protein is TPR repeat-containing protein PA4667 of Pseudomonas aeruginosa (strain ATCC 15692 / DSM 22644 / CIP 104116 / JCM 14847 / LMG 12228 / 1C / PRS 101 / PAO1).